A 649-amino-acid chain; its full sequence is Lipoteichoic acid synthase 2 (649 aa).

The Cytoplasmic segment spans residues 1–9 (MKTFIKERG). A helical membrane pass occupies residues 10–30 (LAFFLIAVVLLWIKTYVGYVL). The Extracellular segment spans residues 31–42 (NFNLGIDNTIQK). A helical membrane pass occupies residues 43 to 63 (ILLFVNPLSSSLFFLGFGLLF). The Cytoplasmic segment spans residues 64–69 (KKKLQQ). The chain crosses the membrane as a helical span at residues 70 to 90 (TAIIVIHFLMSFLLYANIVYY). The Extracellular segment spans residues 91 to 118 (RFFNDFITIPVIMQAKTNGGQLGDSAFS). A helical membrane pass occupies residues 119-139 (LMRPTDAFYFIDTIILIILAI). Topologically, residues 140–151 (KVNKPAETSSKK) are cytoplasmic. The helical transmembrane segment at 152–172 (SFRIIFASSILVFLINLAVAE) threads the bilayer. Over 173–649 (SDRPELLTRS…SETSKDNEDK (477 aa)) the chain is Extracellular. Positions 253 and 297 each coordinate Mn(2+). Residue threonine 297 is part of the active site. Histidine 412 contributes to the substrate binding site. Aspartate 471 and histidine 472 together coordinate Mn(2+). The interval 622 to 649 (FKKVNPSDYDYTKHDEDSSETSKDNEDK) is disordered. Residues 631 to 649 (DYTKHDEDSSETSKDNEDK) show a composition bias toward basic and acidic residues.

Belongs to the LTA synthase family. Proteolytically cleaved.

It localises to the cell membrane. The protein localises to the secreted. The protein operates within cell wall biogenesis; lipoteichoic acid biosynthesis. Functionally, catalyzes the polymerization of lipoteichoic acid (LTA) polyglycerol phosphate, a reaction that presumably uses phosphatidylglycerol (PG) as substrate. This is Lipoteichoic acid synthase 2 (ltaS2) from Bacillus subtilis (strain 168).